A 2517-amino-acid polypeptide reads, in one-letter code: Non-reducing polyketide synthase pkbA (2517 aa).

Positions 59–250 are N-terminal acylcarrier protein transacylase domain (SAT); sequence LERVAGPAEK…KRFDLRGRFH (192 aa). The region spanning 380–775 is the Ketosynthase family 3 (KS3) domain; that stretch reads SEPIAIIGMG…SANTVSSLKE (396 aa). Residues Cys-547, His-682, and His-721 each act as for beta-ketoacyl synthase activity in the active site. The segment at 849 to 1158 is malonyl-CoA:ACP transacylase (MAT) domain; the sequence is AFGGQVARSV…TGTAALADAT (310 aa). Ser-935 acts as the For acyl/malonyl transferase activity in catalysis. The segment at 1221–1353 is N-terminal hotdog fold; sequence EEFLTFVKYK…GTVVLRENDT (133 aa). The PKS/mFAS DH domain occupies 1221–1530; it reads EEFLTFVKYK…FTRVQISSLG (310 aa). The tract at residues 1251–1525 is product template (PT) domain; sequence FVKGHAVLAE…ILGAHFTRVQ (275 aa). His-1255 (proton acceptor; for dehydratase activity) is an active-site residue. Positions 1379–1530 are C-terminal hotdog fold; that stretch reads DCHILQGPVV…FTRVQISSLG (152 aa). The active-site Proton donor; for dehydratase activity is the Asp-1437. The Carrier 1 domain maps to 1574 to 1651; it reads RPTLEISEKL…SISKCLASYL (78 aa). Residue Ser-1611 is modified to O-(pantetheine 4'-phosphoryl)serine. The tract at residues 1659 to 1684 is disordered; it reads QPEDLADADSVESDSDMPTGAVTSGI. Residues 1662–1673 are compositionally biased toward acidic residues; it reads DLADADSVESDS. A Carrier 2 domain is found at 1685-1761; that stretch reads TTPDDAVSRL…DLIALVPALN (77 aa). Residue Ser-1721 is modified to O-(pantetheine 4'-phosphoryl)serine. The segment at 1976-2075 is methyltransferase (CMeT) domain; that stretch reads LELGGGTGGT…IHRMLRPDGF (100 aa). A thioesterase (TE) domain region spans residues 2200–2514; that stretch reads LMIHGGGHIM…RGYDFLKEEV (315 aa).

The cofactor is pantetheine 4'-phosphate.

The catalysed reaction is 3 malonyl-CoA + acetyl-CoA + S-adenosyl-L-methionine + H(+) = 3-methylorsellinate + S-adenosyl-L-homocysteine + 3 CO2 + 4 CoA. Its pathway is phytotoxin biosynthesis. Its function is as follows. Non-reducing polyketide synthase; part of the gene cluster that mediates the biosynthesis of cichorine, a phytotoxin active against knapweed, corn, and soybeans. The first step in the pathway is performed by the non-reducing polyketide synthase pkbA that condenses one acetyl-CoA starter unit with 3 malonyl-CoA units. PkbA also catalyzes one methylation step to produce 3-methylorsellinate. The nonribosomal peptide synthase-like protein cicB, the cytochrome P450 monooxygenase cicH and the O-methyltransferase cicE are involved in the conversion of 3-methylorsellinate into nidulol. CicB converts 3-methylorsellinate to a yet unidentified intermediate, cicH may play a ring-closing role for cichorine and cicE is plausibly responsible for the methylation of one of the phenol groups. The oxidoreductase cicC acts downstream with still unidentified enzymes to further convert nidulol into cichorin. This is Non-reducing polyketide synthase pkbA from Emericella nidulans (strain FGSC A4 / ATCC 38163 / CBS 112.46 / NRRL 194 / M139) (Aspergillus nidulans).